Reading from the N-terminus, the 97-residue chain is Aspartyl/glutamyl-tRNA(Asn/Gln) amidotransferase subunit C (97 aa).

The protein belongs to the GatC family. Heterotrimer of A, B and C subunits.

It carries out the reaction L-glutamyl-tRNA(Gln) + L-glutamine + ATP + H2O = L-glutaminyl-tRNA(Gln) + L-glutamate + ADP + phosphate + H(+). It catalyses the reaction L-aspartyl-tRNA(Asn) + L-glutamine + ATP + H2O = L-asparaginyl-tRNA(Asn) + L-glutamate + ADP + phosphate + 2 H(+). Functionally, allows the formation of correctly charged Asn-tRNA(Asn) or Gln-tRNA(Gln) through the transamidation of misacylated Asp-tRNA(Asn) or Glu-tRNA(Gln) in organisms which lack either or both of asparaginyl-tRNA or glutaminyl-tRNA synthetases. The reaction takes place in the presence of glutamine and ATP through an activated phospho-Asp-tRNA(Asn) or phospho-Glu-tRNA(Gln). The polypeptide is Aspartyl/glutamyl-tRNA(Asn/Gln) amidotransferase subunit C (Prochlorococcus marinus (strain MIT 9211)).